The sequence spans 178 residues: Ribosome maturation factor RimP (178 aa).

The protein belongs to the RimP family.

The protein resides in the cytoplasm. Required for maturation of 30S ribosomal subunits. The chain is Ribosome maturation factor RimP from Maricaulis maris (strain MCS10) (Caulobacter maris).